The chain runs to 167 residues: NAD(P)H-quinone oxidoreductase subunit I, chloroplastic (167 aa).

2 4Fe-4S ferredoxin-type domains span residues 55-84 and 95-124; these read GRIH…VDWK and LNYS…MTEE. [4Fe-4S] cluster contacts are provided by cysteine 64, cysteine 67, cysteine 70, cysteine 74, cysteine 104, cysteine 107, cysteine 110, and cysteine 114.

This sequence belongs to the complex I 23 kDa subunit family. In terms of assembly, NDH is composed of at least 16 different subunits, 5 of which are encoded in the nucleus. It depends on [4Fe-4S] cluster as a cofactor.

It localises to the plastid. The protein localises to the chloroplast thylakoid membrane. It catalyses the reaction a plastoquinone + NADH + (n+1) H(+)(in) = a plastoquinol + NAD(+) + n H(+)(out). The catalysed reaction is a plastoquinone + NADPH + (n+1) H(+)(in) = a plastoquinol + NADP(+) + n H(+)(out). NDH shuttles electrons from NAD(P)H:plastoquinone, via FMN and iron-sulfur (Fe-S) centers, to quinones in the photosynthetic chain and possibly in a chloroplast respiratory chain. The immediate electron acceptor for the enzyme in this species is believed to be plastoquinone. Couples the redox reaction to proton translocation, and thus conserves the redox energy in a proton gradient. The chain is NAD(P)H-quinone oxidoreductase subunit I, chloroplastic from Morus indica (Mulberry).